Consider the following 210-residue polypeptide: Mitochondrial cardiolipin hydrolase (210 aa).

At 1–6 the chain is on the mitochondrial intermembrane side; the sequence is MLLWGR. The helical transmembrane segment at 7–24 threads the bilayer; the sequence is WKVVAGLAGLALSLELLL. Topologically, residues 25 to 210 are cytoplasmic; that stretch reads RYMRRRKPIR…YDFFPEKENK (186 aa). A PLD phosphodiesterase domain is found at 138–165; that stretch reads SSGYMHHKFAVVDGTVVLTGSLNWTVQA. Catalysis depends on residues histidine 143, lysine 145, and aspartate 150.

It belongs to the phospholipase D family. MitoPLD/Zucchini subfamily. As to quaternary structure, homodimer.

The protein localises to the mitochondrion outer membrane. The enzyme catalyses a cardiolipin + H2O = a 1,2-diacyl-sn-glycero-3-phospho-(1'-sn-glycerol) + a 1,2-diacyl-sn-glycero-3-phosphate + H(+). In terms of biological role, presents phospholipase and nuclease activities, depending on the different physiological conditions. Plays a key role in mitochondrial fusion and fission via its phospholipase activity. In its phospholipase role, it uses the mitochondrial lipid cardiolipin as substrate to generate phosphatidate (PA or 1,2-diacyl-sn-glycero-3-phosphate), a second messenger signaling lipid. Production of PA facilitates Mitofusin-mediated fusion, whereas the cleavage of PA by the Lipin family of phosphatases produces diacylgycerol (DAG) which promotes mitochondrial fission. Regulates mitochondrial shape through facilitating mitochondrial fusion. During spermatogenesis, plays a critical role in PIWI-interacting RNA (piRNA) biogenesis. piRNAs provide essential protection against the activity of mobile genetic elements. piRNA-mediated transposon silencing is thus critical for maintaining genome stability, in particular in germline cells when transposons are mobilized as a consequence of wide-spread genomic demethylation. Has been shown to be a backbone-non-specific, single strand-specific nuclease, cleaving either RNA or DNA substrates with similar affinity. Produces 5' phosphate and 3' hydroxyl termini, suggesting it could directly participate in the processing of primary piRNA transcripts. Has been proposed to act as a cardiolipin hydrolase to generate phosphatidic acid at mitochondrial surface. Although it cannot be excluded that it can act as a phospholipase in some circumstances, this activity could not be confirmed. In Xenopus tropicalis (Western clawed frog), this protein is Mitochondrial cardiolipin hydrolase (pld6).